A 205-amino-acid polypeptide reads, in one-letter code: Adenylate kinase (205 aa).

Gly-10–Thr-15 is a binding site for ATP. The tract at residues Ser-30–Val-59 is NMP. Residues Thr-31, Arg-36, Glu-57–Val-59, Gly-85–Arg-88, and Gln-92 contribute to the AMP site. The LID stretch occupies residues Thr-126 to Asp-139. An ATP-binding site is contributed by Arg-127. Positions 136 and 147 each coordinate AMP. Lys-175 lines the ATP pocket.

This sequence belongs to the adenylate kinase family. Monomer.

The protein resides in the cytoplasm. It carries out the reaction AMP + ATP = 2 ADP. Its pathway is purine metabolism; AMP biosynthesis via salvage pathway; AMP from ADP: step 1/1. Functionally, catalyzes the reversible transfer of the terminal phosphate group between ATP and AMP. Plays an important role in cellular energy homeostasis and in adenine nucleotide metabolism. The chain is Adenylate kinase from Parvibaculum lavamentivorans (strain DS-1 / DSM 13023 / NCIMB 13966).